The sequence spans 116 residues: Large ribosomal subunit protein bL19 (116 aa).

This sequence belongs to the bacterial ribosomal protein bL19 family.

This protein is located at the 30S-50S ribosomal subunit interface and may play a role in the structure and function of the aminoacyl-tRNA binding site. The sequence is that of Large ribosomal subunit protein bL19 from Chloroflexus aggregans (strain MD-66 / DSM 9485).